The sequence spans 706 residues: DNA helicase/primase complex-associated protein (706 aa).

Residues 203–249 are disordered; that stretch reads CPGGDGGEEGDGAEGGDGGVGGAGDGAGAGGGSSGKPPAGKRGRPTR. Residues 217 to 236 are compositionally biased toward gly residues; the sequence is GGDGGVGGAGDGAGAGGGSS.

Belongs to the herpesviridae HEPA family. In terms of assembly, associates with the primase and the helicase to form the helicase-primase complex. Interacts with the origin-binding protein. Interacts with the polymerase catalytic subunit.

It is found in the host nucleus. Its function is as follows. Component of the helicase/primase complex. Unwinds the DNA at the replication forks and generates single-stranded DNA for both leading and lagging strand synthesis. The primase synthesizes short RNA primers on the lagging strand that the polymerase presumably elongates using dNTPs. The primase-associated factor has no known catalytic activity in the complex and may serve to facilitate the formation of the replisome by directly interacting with the origin-binding protein and the polymerase. This is DNA helicase/primase complex-associated protein (40) from Equus caballus (Horse).